The following is a 598-amino-acid chain: UvrABC system protein C (598 aa).

The GIY-YIG domain occupies 14-91; that stretch reads DSPGCYLHKD…IQKNMPKYNI (78 aa). The UVR domain maps to 196-231; that stretch reads DKIIEDLRSKMLAASEEMAFERAAEYRDLISGIATM.

This sequence belongs to the UvrC family. Interacts with UvrB in an incision complex.

The protein resides in the cytoplasm. Functionally, the UvrABC repair system catalyzes the recognition and processing of DNA lesions. UvrC both incises the 5' and 3' sides of the lesion. The N-terminal half is responsible for the 3' incision and the C-terminal half is responsible for the 5' incision. This Streptococcus pyogenes serotype M5 (strain Manfredo) protein is UvrABC system protein C.